Consider the following 740-residue polypeptide: Ion-translocating oxidoreductase complex subunit C (740 aa).

4Fe-4S ferredoxin-type domains lie at Gly369–Tyr397 and Lys407–Phe436. 8 residues coordinate [4Fe-4S] cluster: Cys377, Cys380, Cys383, Cys387, Cys416, Cys419, Cys422, and Cys426. A disordered region spans residues Lys602–Lys684. Composition is skewed to low complexity over residues Gln605–Gln615 and Gln637–Gln647.

Belongs to the 4Fe4S bacterial-type ferredoxin family. RnfC subfamily. As to quaternary structure, the complex is composed of six subunits: RsxA, RsxB, RsxC, RsxD, RsxE and RsxG. The cofactor is [4Fe-4S] cluster.

It is found in the cell inner membrane. Functionally, part of a membrane-bound complex that couples electron transfer with translocation of ions across the membrane. Required to maintain the reduced state of SoxR. The polypeptide is Ion-translocating oxidoreductase complex subunit C (Escherichia coli O7:K1 (strain IAI39 / ExPEC)).